The chain runs to 200 residues: NAD(P)H dehydrogenase (quinone) (200 aa).

The 188-residue stretch at 4–191 folds into the Flavodoxin-like domain; it reads VLVLYYSMYG…DIARFQGKHV (188 aa). FMN contacts are provided by residues 10-15 and 79-81; these read SMYGHI and TRF. Tyr-12 provides a ligand contact to NAD(+). Trp-99 serves as a coordination point for substrate. Residues 114–120 and His-135 each bind FMN; that span reads STGTQHG.

The protein belongs to the WrbA family. FMN serves as cofactor.

It carries out the reaction a quinone + NADH + H(+) = a quinol + NAD(+). The enzyme catalyses a quinone + NADPH + H(+) = a quinol + NADP(+). The protein is NAD(P)H dehydrogenase (quinone) of Paraburkholderia phytofirmans (strain DSM 17436 / LMG 22146 / PsJN) (Burkholderia phytofirmans).